We begin with the raw amino-acid sequence, 163 residues long: Transcriptional repressor NrdR (163 aa).

A zinc finger spans residues Cys-3–Cys-34. The ATP-cone domain occupies Leu-46–Asp-136.

This sequence belongs to the NrdR family. Zn(2+) is required as a cofactor.

Its function is as follows. Negatively regulates transcription of bacterial ribonucleotide reductase nrd genes and operons by binding to NrdR-boxes. The chain is Transcriptional repressor NrdR from Corynebacterium jeikeium (strain K411).